A 407-amino-acid chain; its full sequence is Bifunctional enzyme IspD/IspF (407 aa).

A 2-C-methyl-D-erythritol 4-phosphate cytidylyltransferase region spans residues 1 to 246; it reads MTEASENASA…SSERTHFPDI (246 aa). The interval 247–407 is 2-C-methyl-D-erythritol 2,4-cyclodiphosphate synthase; that stretch reads RTGNGYDVHA…SVVFPGEVPE (161 aa). A divalent metal cation is bound by residues D253 and H255. 4-CDP-2-C-methyl-D-erythritol 2-phosphate-binding positions include 253-255 and 279-280; these read DVH and HS. An a divalent metal cation-binding site is contributed by H287. Residues 301 to 303, 377 to 380, F384, and R387 contribute to the 4-CDP-2-C-methyl-D-erythritol 2-phosphate site; these read DIG and TTNE.

This sequence in the N-terminal section; belongs to the IspD/TarI cytidylyltransferase family. IspD subfamily. In the C-terminal section; belongs to the IspF family. It depends on a divalent metal cation as a cofactor.

The catalysed reaction is 2-C-methyl-D-erythritol 4-phosphate + CTP + H(+) = 4-CDP-2-C-methyl-D-erythritol + diphosphate. The enzyme catalyses 4-CDP-2-C-methyl-D-erythritol 2-phosphate = 2-C-methyl-D-erythritol 2,4-cyclic diphosphate + CMP. It participates in isoprenoid biosynthesis; isopentenyl diphosphate biosynthesis via DXP pathway; isopentenyl diphosphate from 1-deoxy-D-xylulose 5-phosphate: step 2/6. Its pathway is isoprenoid biosynthesis; isopentenyl diphosphate biosynthesis via DXP pathway; isopentenyl diphosphate from 1-deoxy-D-xylulose 5-phosphate: step 4/6. Functionally, bifunctional enzyme that catalyzes the formation of 4-diphosphocytidyl-2-C-methyl-D-erythritol from CTP and 2-C-methyl-D-erythritol 4-phosphate (MEP) (IspD), and catalyzes the conversion of 4-diphosphocytidyl-2-C-methyl-D-erythritol 2-phosphate (CDP-ME2P) to 2-C-methyl-D-erythritol 2,4-cyclodiphosphate (ME-CPP) with a corresponding release of cytidine 5-monophosphate (CMP) (IspF). This is Bifunctional enzyme IspD/IspF from Mesorhizobium japonicum (strain LMG 29417 / CECT 9101 / MAFF 303099) (Mesorhizobium loti (strain MAFF 303099)).